Here is a 352-residue protein sequence, read N- to C-terminus: Sodium-lithium/proton antiporter (352 aa).

The next 8 helical transmembrane spans lie at 11–31 (ILLL…PVSV), 32–52 (PLII…WMQF), 61–81 (AVTI…TYAV), 159–179 (IPEY…FMLE), 216–236 (AQFL…FWIT), 241–261 (IVMS…SIVI), 271–291 (IVGD…LLAI), and 317–337 (IGLQ…VIAF).

It belongs to the autoinducer-2 exporter (AI-2E) (TC 2.A.86) family.

The protein localises to the cell membrane. Catalyzes the pH-dependent efflux of sodium and lithium in exchange for external protons. The sequence is that of Sodium-lithium/proton antiporter from Halobacillus andaensis.